Consider the following 907-residue polypeptide: Protein translocase subunit SecA (907 aa).

ATP is bound by residues Q86, 104 to 108 (GEGKT), and D511. 2 stretches are compositionally biased toward basic and acidic residues: residues 838-856 (AQEE…HESV) and 869-888 (EEAP…KRND). Residues 838 to 907 (AQEEWKESMS…YKQCHGKVVD (70 aa)) form a disordered region. 4 residues coordinate Zn(2+): C890, C892, C901, and H902. A compositionally biased stretch (basic residues) spans 896–907 (KKYKQCHGKVVD).

Belongs to the SecA family. Monomer and homodimer. Part of the essential Sec protein translocation apparatus which comprises SecA, SecYEG and auxiliary proteins SecDF-YajC and YidC. Zn(2+) serves as cofactor.

It is found in the cell inner membrane. The protein localises to the cytoplasm. It carries out the reaction ATP + H2O + cellular proteinSide 1 = ADP + phosphate + cellular proteinSide 2.. Part of the Sec protein translocase complex. Interacts with the SecYEG preprotein conducting channel. Has a central role in coupling the hydrolysis of ATP to the transfer of proteins into and across the cell membrane, serving both as a receptor for the preprotein-SecB complex and as an ATP-driven molecular motor driving the stepwise translocation of polypeptide chains across the membrane. The chain is Protein translocase subunit SecA from Francisella philomiragia subsp. philomiragia (strain ATCC 25017 / CCUG 19701 / FSC 153 / O#319-036).